Here is a 339-residue protein sequence, read N- to C-terminus: Anthranilate phosphoribosyltransferase (339 aa).

5-phospho-alpha-D-ribose 1-diphosphate is bound by residues Gly-82, 85–86 (GD), 92–95 (NIST), 110–118 (KHGNRGISS), and Ser-122. Position 82 (Gly-82) interacts with anthranilate. Residue Ser-94 participates in Mg(2+) binding. Asn-113 is a binding site for anthranilate. Arg-168 contributes to the anthranilate binding site. Mg(2+)-binding residues include Asp-227 and Glu-228.

This sequence belongs to the anthranilate phosphoribosyltransferase family. In terms of assembly, homodimer. It depends on Mg(2+) as a cofactor.

The enzyme catalyses N-(5-phospho-beta-D-ribosyl)anthranilate + diphosphate = 5-phospho-alpha-D-ribose 1-diphosphate + anthranilate. The protein operates within amino-acid biosynthesis; L-tryptophan biosynthesis; L-tryptophan from chorismate: step 2/5. Catalyzes the transfer of the phosphoribosyl group of 5-phosphorylribose-1-pyrophosphate (PRPP) to anthranilate to yield N-(5'-phosphoribosyl)-anthranilate (PRA). This Vesicomyosocius okutanii subsp. Calyptogena okutanii (strain HA) protein is Anthranilate phosphoribosyltransferase.